The chain runs to 163 residues: Phosphopantetheine adenylyltransferase (163 aa).

Serine 9 serves as a coordination point for substrate. Residues serine 9 to phenylalanine 10 and histidine 17 contribute to the ATP site. Residues lysine 41, threonine 73, and arginine 87 each coordinate substrate. Residues glycine 88 to arginine 90, glutamate 98, and tyrosine 123 to serine 129 contribute to the ATP site.

Belongs to the bacterial CoaD family. Homohexamer. Mg(2+) serves as cofactor.

It is found in the cytoplasm. The catalysed reaction is (R)-4'-phosphopantetheine + ATP + H(+) = 3'-dephospho-CoA + diphosphate. The protein operates within cofactor biosynthesis; coenzyme A biosynthesis; CoA from (R)-pantothenate: step 4/5. Its function is as follows. Reversibly transfers an adenylyl group from ATP to 4'-phosphopantetheine, yielding dephospho-CoA (dPCoA) and pyrophosphate. The chain is Phosphopantetheine adenylyltransferase from Lachnoclostridium phytofermentans (strain ATCC 700394 / DSM 18823 / ISDg) (Clostridium phytofermentans).